We begin with the raw amino-acid sequence, 730 residues long: Probable palmitoyltransferase AKR2 (730 aa).

ANK repeat units lie at residues 32–62, 66–95, 100–129, 133–166, 172–201, and 205–234; these read FVVETFIEAIKDDDLKVVKEVVESGAIDINK, DELPGLHWACIKNRFSIAKFLIRRGANVNQ, ERATALHWAARYGHVYIVDLLLKHGANPTL, QGLNILHFSVYSSNIMLVVYVLYFVVSNNNNVDI, NNRTPLLWAAYQGDFLTVELLLKFGATVAL, and RGFNALHCALVGGDQRAICDLILSGANFYE. A run of 4 helical transmembrane segments spans residues 283-303, 309-328, 344-364, and 376-396; these read LMIFLSPFALMIYTYLISLIL, IALSLLVIVVTVNSLKKFVL, TPFFSGLFMSTFSFLLFIWVK, and AKDAQLLITSLFTFVLFLKLV. In terms of domain architecture, DHHC spans 429–479; the sequence is NFCVETLERKPLRSKYSLFSGALVARFNHYCPWVYNDIGLKNHKLFMFFAF. Cysteine 459 acts as the S-palmitoyl cysteine intermediate in catalysis. Helical transmembrane passes span 473–493 and 530–550; these read LFMFFAFSVQYEMFLFMWLCL and TFFLFIWISMNFVWLGGMLIV.

The protein belongs to the DHHC palmitoyltransferase family. AKR/ZDHHC17 subfamily.

It localises to the membrane. The enzyme catalyses L-cysteinyl-[protein] + hexadecanoyl-CoA = S-hexadecanoyl-L-cysteinyl-[protein] + CoA. This Saccharomyces uvarum (strain ATCC 76518 / CBS 7001 / CLIB 283 / NBRC 10550 / MCYC 623 / NCYC 2669 / NRRL Y-11845) (Yeast) protein is Probable palmitoyltransferase AKR2 (AKR2).